Reading from the N-terminus, the 489-residue chain is N-succinylglutamate 5-semialdehyde dehydrogenase (489 aa).

Gly223 to Gly228 provides a ligand contact to NAD(+). Residues Glu246 and Cys280 contribute to the active site.

Belongs to the aldehyde dehydrogenase family. AstD subfamily.

The catalysed reaction is N-succinyl-L-glutamate 5-semialdehyde + NAD(+) + H2O = N-succinyl-L-glutamate + NADH + 2 H(+). It functions in the pathway amino-acid degradation; L-arginine degradation via AST pathway; L-glutamate and succinate from L-arginine: step 4/5. Catalyzes the NAD-dependent reduction of succinylglutamate semialdehyde into succinylglutamate. This is N-succinylglutamate 5-semialdehyde dehydrogenase from Acinetobacter baylyi (strain ATCC 33305 / BD413 / ADP1).